The chain runs to 204 residues: Guanylate kinase (204 aa).

In terms of domain architecture, Guanylate kinase-like spans 18–196; sequence PKLFTISAPA…SYEVLKSIFI (179 aa). 25–32 is a binding site for ATP; that stretch reads APAGAGKT.

It belongs to the guanylate kinase family.

It localises to the cytoplasm. The enzyme catalyses GMP + ATP = GDP + ADP. In terms of biological role, essential for recycling GMP and indirectly, cGMP. The polypeptide is Guanylate kinase (Chlamydia abortus (strain DSM 27085 / S26/3) (Chlamydophila abortus)).